Consider the following 300-residue polypeptide: Ribosomal protein bS6--L-glutamate ligase (300 aa).

Residues 104-287 form the ATP-grasp domain; that stretch reads LQLLARQGID…IAGRMIQWIE (184 aa). Residues K141, 178–179, D187, and 211–213 contribute to the ATP site; these read EY and RSN. Mg(2+) is bound by residues D248, E260, and N262. Mn(2+) contacts are provided by D248, E260, and N262.

This sequence belongs to the RimK family. The cofactor is Mg(2+). Mn(2+) serves as cofactor.

Functionally, an L-glutamate ligase that catalyzes the ATP-dependent post-translational addition of glutamate residues to the C-terminus of ribosomal protein bS6 (RpsF). Is also able to catalyze the synthesis of poly-alpha-glutamate in vitro, via ATP hydrolysis from unprotected glutamate as substrate. The number of glutamate residues added to either RpsF or to poly-alpha-glutamate changes with pH. This chain is Ribosomal protein bS6--L-glutamate ligase, found in Salmonella schwarzengrund (strain CVM19633).